Consider the following 834-residue polypeptide: Glycerol-3-phosphate acyltransferase (834 aa).

Residues 309 to 314 (CHRSHI) carry the HXXXXD motif motif.

The protein belongs to the GPAT/DAPAT family.

The protein resides in the cell inner membrane. The enzyme catalyses sn-glycerol 3-phosphate + an acyl-CoA = a 1-acyl-sn-glycero-3-phosphate + CoA. The protein operates within phospholipid metabolism; CDP-diacylglycerol biosynthesis; CDP-diacylglycerol from sn-glycerol 3-phosphate: step 1/3. The chain is Glycerol-3-phosphate acyltransferase from Pseudomonas aeruginosa (strain UCBPP-PA14).